We begin with the raw amino-acid sequence, 330 residues long: Ketol-acid reductoisomerase (NADP(+)) (330 aa).

A KARI N-terminal Rossmann domain is found at 3-184 (LPVYYDKDID…GGGRMGVLET (182 aa)). NADP(+)-binding positions include 26–29 (YGAQ), Ser52, and Ser54. His109 is an active-site residue. Gly135 is a binding site for NADP(+). The KARI C-terminal knotted domain occupies 185 to 329 (SFKEECESDL…EILRAPFNHK (145 aa)). Mg(2+) is bound by residues Asp193, Glu197, Glu229, and Glu233. Ser254 is a substrate binding site.

The protein belongs to the ketol-acid reductoisomerase family. It depends on Mg(2+) as a cofactor.

It carries out the reaction (2R)-2,3-dihydroxy-3-methylbutanoate + NADP(+) = (2S)-2-acetolactate + NADPH + H(+). It catalyses the reaction (2R,3R)-2,3-dihydroxy-3-methylpentanoate + NADP(+) = (S)-2-ethyl-2-hydroxy-3-oxobutanoate + NADPH + H(+). The protein operates within amino-acid biosynthesis; L-isoleucine biosynthesis; L-isoleucine from 2-oxobutanoate: step 2/4. Its pathway is amino-acid biosynthesis; L-valine biosynthesis; L-valine from pyruvate: step 2/4. Functionally, involved in the biosynthesis of branched-chain amino acids (BCAA). Catalyzes an alkyl-migration followed by a ketol-acid reduction of (S)-2-acetolactate (S2AL) to yield (R)-2,3-dihydroxy-isovalerate. In the isomerase reaction, S2AL is rearranged via a Mg-dependent methyl migration to produce 3-hydroxy-3-methyl-2-ketobutyrate (HMKB). In the reductase reaction, this 2-ketoacid undergoes a metal-dependent reduction by NADPH to yield (R)-2,3-dihydroxy-isovalerate. The protein is Ketol-acid reductoisomerase (NADP(+)) of Helicobacter pylori (strain Shi470).